The sequence spans 526 residues: Adenylyl cyclase-associated protein (526 aa).

The tract at residues 1-168 (MPDSKYTMQG…RQSKYFAYLS (168 aa)) is adenyl cyclase-binding. Disordered stretches follow at residues 43-72 (EASK…PEVE), 255-304 (QSTK…DANK), and 326-371 (KVDK…RPPR). The segment covering 45–64 (SKNNKPSDSGADANTTNEPS) has biased composition (polar residues). The short motif at 169–369 (ALSEGAPLFS…KPSTLKTKRP (201 aa)) is the SH3-binding element. Residues 262-274 (ATSSPSPASATAA) show a composition bias toward low complexity. The span at 275–285 (PAPPPPPPAPP) shows a compositional bias: pro residues. Positions 290–302 (EISNDTPATSSDA) are enriched in polar residues. Residues 326–338 (KVDKSQQTHKNPE) are compositionally biased toward basic and acidic residues. Positions 342 to 352 (SSTVSSTGSKS) are enriched in low complexity. The interval 354–361 (PPPRPKKP) is interaction with SH3 domain of ABP1. The span at 357–370 (RPKKPSTLKTKRPP) shows a compositional bias: basic residues. One can recognise a C-CAP/cofactor C-like domain in the interval 369–504 (PPRKELVGNK…EDDDYVEFPI (136 aa)). A dimerization and actin-binding region spans residues 370–526 (PRKELVGNKW…FKSAVFEHAG (157 aa)). Position 454 is a phosphoserine (S454).

This sequence belongs to the CAP family. As to quaternary structure, homodimer.

It is found in the cytoplasm. It localises to the cytoskeleton. The protein localises to the actin patch. Its function is as follows. The N-terminal domain binds to adenylyl cyclase, thereby enabling adenylyl cyclase to be activated by upstream regulatory signals, such as Ras. The C-terminal domain is required for normal cellular morphology and growth control. The chain is Adenylyl cyclase-associated protein (SRV2) from Saccharomyces cerevisiae (strain ATCC 204508 / S288c) (Baker's yeast).